Reading from the N-terminus, the 183-residue chain is Dual-action ribosomal maturation protein DarP (183 aa).

The interval 1–23 (MTKQPDDWLDEVPDNENDDDDDE) is disordered. The segment covering 7–23 (DWLDEVPDNENDDDDDE) has biased composition (acidic residues).

It belongs to the DarP family.

The protein localises to the cytoplasm. Member of a network of 50S ribosomal subunit biogenesis factors which assembles along the 30S-50S interface, preventing incorrect 23S rRNA structures from forming. Promotes peptidyl transferase center (PTC) maturation. This is Dual-action ribosomal maturation protein DarP from Cronobacter sakazakii (strain ATCC BAA-894) (Enterobacter sakazakii).